The primary structure comprises 154 residues: Myoglobin (154 aa).

Residues 2-148 (GLSDGEWQLV…FRKDMASNYK (147 aa)) form the Globin domain. Position 4 is a phosphoserine (S4). H65 lines the nitrite pocket. H65 contributes to the O2 binding site. Residue T68 is modified to Phosphothreonine. H94 lines the heme b pocket.

It belongs to the globin family. In terms of assembly, monomeric.

It is found in the cytoplasm. Its subcellular location is the sarcoplasm. The enzyme catalyses Fe(III)-heme b-[protein] + nitric oxide + H2O = Fe(II)-heme b-[protein] + nitrite + 2 H(+). It carries out the reaction H2O2 + AH2 = A + 2 H2O. In terms of biological role, monomeric heme protein which primary function is to store oxygen and facilitate its diffusion within muscle tissues. Reversibly binds oxygen through a pentacoordinated heme iron and enables its timely and efficient release as needed during periods of heightened demand. Depending on the oxidative conditions of tissues and cells, and in addition to its ability to bind oxygen, it also has a nitrite reductase activity whereby it regulates the production of bioactive nitric oxide. Under stress conditions, like hypoxia and anoxia, it also protects cells against reactive oxygen species thanks to its pseudoperoxidase activity. This is Myoglobin (MB) from Pan troglodytes (Chimpanzee).